We begin with the raw amino-acid sequence, 424 residues long: MAKYLINARVEVDGVVEKHDIIGAIFGQTEGLFGEQFDLRTLQDKNRIGRIQVMTKIHNGKTIGELIIPSNLDRLETALVAAMIESVDRVGPYSARIEVVDIIDVRLEKIKKIIDRAIEILHEWSKEKAPDIKEILKEMQEALKVPEPQKYGPEQLPAGPGVDESDTIIIVEGRADVINLLRYGFTNVIALGGARKVPNTIKNLAKKKKVIVFLDGDHGGDLILKELLRTIKVDFIARAPEGREVEELTGKEIREALSKAVPTREYLEKLAKQGNKEAQYLLQVQERLAREVAEQIKPQVKVEEKKPVEKPVPKPPKTVEEVVEAVSIPLRIREDIKSLYGTLEAILYDNEWNSVKRLPVRDLVNTLDELDENNVQAIVMDGIITQRLIDKASEKKVKMIIAAKIGRINYKPPEILILTFNDIM.

Residues 166–241 form the Toprim domain; it reads DTIIIVEGRA…KVDFIARAPE (76 aa). E172, D215, and D217 together coordinate Mg(2+).

It belongs to the archaeal DnaG primase family. As to quaternary structure, forms a ternary complex with MCM helicase and DNA. Component of the archaeal exosome complex. Mg(2+) serves as cofactor.

It catalyses the reaction ssDNA + n NTP = ssDNA/pppN(pN)n-1 hybrid + (n-1) diphosphate.. Its function is as follows. RNA polymerase that catalyzes the synthesis of short RNA molecules used as primers for DNA polymerase during DNA replication. Also part of the exosome, which is a complex involved in RNA degradation. Acts as a poly(A)-binding protein that enhances the interaction between heteromeric, adenine-rich transcripts and the exosome. This Staphylothermus marinus (strain ATCC 43588 / DSM 3639 / JCM 9404 / F1) protein is DNA primase DnaG.